Consider the following 103-residue polypeptide: Co-chaperonin GroES (103 aa).

The protein belongs to the GroES chaperonin family. Heptamer of 7 subunits arranged in a ring. Interacts with the chaperonin GroEL.

Its subcellular location is the cytoplasm. Functionally, together with the chaperonin GroEL, plays an essential role in assisting protein folding. The GroEL-GroES system forms a nano-cage that allows encapsulation of the non-native substrate proteins and provides a physical environment optimized to promote and accelerate protein folding. GroES binds to the apical surface of the GroEL ring, thereby capping the opening of the GroEL channel. The protein is Co-chaperonin GroES of Rippkaea orientalis (strain PCC 8801 / RF-1) (Cyanothece sp. (strain PCC 8801)).